The chain runs to 489 residues: Glycogen synthase (489 aa).

Residue Arg20 coordinates ADP-alpha-D-glucose.

It belongs to the glycosyltransferase 1 family. Bacterial/plant glycogen synthase subfamily.

The catalysed reaction is [(1-&gt;4)-alpha-D-glucosyl](n) + ADP-alpha-D-glucose = [(1-&gt;4)-alpha-D-glucosyl](n+1) + ADP + H(+). It functions in the pathway glycan biosynthesis; glycogen biosynthesis. Its function is as follows. Synthesizes alpha-1,4-glucan chains using ADP-glucose. This chain is Glycogen synthase, found in Chlorobium limicola (strain DSM 245 / NBRC 103803 / 6330).